The following is a 440-amino-acid chain: Xylose isomerase (440 aa).

Mg(2+) contacts are provided by D307 and D309.

It belongs to the xylose isomerase family. Homotetramer. The cofactor is Mg(2+).

The protein resides in the cytoplasm. The enzyme catalyses alpha-D-xylose = alpha-D-xylulofuranose. The sequence is that of Xylose isomerase from Pectobacterium carotovorum subsp. carotovorum (strain PC1).